A 193-amino-acid chain; its full sequence is Adenine phosphoribosyltransferase (193 aa).

This sequence belongs to the purine/pyrimidine phosphoribosyltransferase family. Homodimer.

It localises to the cytoplasm. The enzyme catalyses AMP + diphosphate = 5-phospho-alpha-D-ribose 1-diphosphate + adenine. It participates in purine metabolism; AMP biosynthesis via salvage pathway; AMP from adenine: step 1/1. In terms of biological role, catalyzes a salvage reaction resulting in the formation of AMP, that is energically less costly than de novo synthesis. The protein is Adenine phosphoribosyltransferase of Bifidobacterium longum (strain NCC 2705).